The following is a 224-amino-acid chain: Attacin-A (224 aa).

The N-terminal stretch at 1 to 20 (MQKTSILIVALVALFAITEA) is a signal peptide. A propeptide spanning residues 21–34 (LPSLPTTGPIRVRR) is cleaved from the precursor.

The protein belongs to the attacin/sarcotoxin-2 family. In terms of tissue distribution, hemolymph (at protein level).

The protein localises to the secreted. Hemolymph antibacterial protein. The sequence is that of Attacin-A (AttA) from Drosophila melanogaster (Fruit fly).